We begin with the raw amino-acid sequence, 335 residues long: Abasic site processing protein HMCES (335 aa).

Residue Cys2 is the Nucleophile of the active site. Cys2 carries the post-translational modification Thiazolidine linkage to a ring-opened DNA abasic site. Over residues 24-39 (QGGRKWPNWRDGDSDK) the composition is skewed to basic and acidic residues. Positions 24 to 51 (QGGRKWPNWRDGDSDKYQPSYNKSPQSN) are disordered. Over residues 40–51 (YQPSYNKSPQSN) the composition is skewed to polar residues. The active site involves Glu129. The segment at 284–335 (LQNKSPKKEESHSIQSPKLSQFGAPPKKTSAGLMQQWLKKEDGEPSPKRAKK) is disordered. Residues 321–335 (LKKEDGEPSPKRAKK) show a composition bias toward basic and acidic residues.

Belongs to the SOS response-associated peptidase family. In terms of processing, ubiquitination of the hmces DNA-protein cross-link by rfwd3 may promotes its degradation.

The protein resides in the chromosome. Formation and reversal of DNA-protein cross-link depends on DNA context. Catalyzes formation of the thiazolidine linkage in presence of abasic sites in single-stranded DNA. Mediates the reversal of the thiazolidine cross-link in presence of double stranded DNA. Its function is as follows. Sensor of abasic sites in single-stranded DNA (ssDNA) required to preserve genome integrity by promoting error-free repair of abasic sites. Acts as an enzyme that recognizes and binds abasic sites in ssDNA at replication forks and chemically modifies the lesion by forming a covalent cross-link with DNA: forms a stable thiazolidine linkage between a ring-opened abasic site and the alpha-amino and sulfhydryl substituents of its N-terminal catalytic cysteine residue. The hmces DNA-protein cross-link is then either reversed or degraded. Hmces is able to catalyze the reversal of its thiazolidine cross-link and cycle between a cross-link and a non-cross-linked state depending on DNA context: mediates self-reversal of the thiazolidine cross-link in double stranded DNA, allowing apex1 to initiate downstream repair of abasic sites. The hmces DNA-protein cross-link can also be degraded by the sprtn metalloprotease following unfolding by the brip1/fancj helicase. Promotes error-free repair of abasic sites by protecting abasic sites from translesion synthesis (TLS) polymerases and endonucleases that are error-prone and would generate mutations and double-strand breaks. Acts as a protease: mediates autocatalytic processing of its N-terminal methionine in order to expose the catalytic cysteine. The hmces DNA-protein cross-link is then either reversed or degraded. According to a model, the HMCES DNA-protein cross-link. In Xenopus tropicalis (Western clawed frog), this protein is Abasic site processing protein HMCES.